A 403-amino-acid polypeptide reads, in one-letter code: Fasciclin-like arabinogalactan protein 2 (403 aa).

A signal peptide spans 1 to 26 (MAYLRRAATALVLIFQLHLFLSLSNA). FAS1 domains are found at residues 27-174 (HNIT…SQVL) and 187-326 (SDLI…DKVL). N28, N130, N164, and N248 each carry an N-linked (GlcNAc...) asparagine glycan. A disordered region spans residues 338-371 (SAPAPKSSKKKPKNAEADADGPSADAPSDDDVEV). The GPI-anchor amidated alanine moiety is linked to residue A378. A propeptide spans 379–403 (VSAMITRTSNVVTAIVGLCFGVWLM) (removed in mature form).

This sequence belongs to the fasciclin-like AGP family. As to expression, expressed mainly in flowers and to a lesser extent in leaves and roots.

It localises to the cell membrane. Its function is as follows. May be a cell surface adhesion protein. The polypeptide is Fasciclin-like arabinogalactan protein 2 (FLA2) (Arabidopsis thaliana (Mouse-ear cress)).